We begin with the raw amino-acid sequence, 117 residues long: Protein MGF 110-11L (117 aa).

Residues 3 to 23 (VFLGLLLGYSTILILTYQSPA) form a helical membrane-spanning segment. The N-linked (GlcNAc...) asparagine; by host glycan is linked to Asn-62. 2 helical membrane-spanning segments follow: residues 69–89 (YYCFYLVFSFAFAGCIAFAIC) and 94–114 (LCTTMKLLMLLSILVLLSQPI).

The protein belongs to the asfivirus MGF 110 family.

Its subcellular location is the host membrane. Its function is as follows. Plays a role in virus cell tropism, and may be required for efficient virus replication in macrophages. This African swine fever virus (isolate Warthog/Namibia/Wart80/1980) (ASFV) protein is Protein MGF 110-11L.